Reading from the N-terminus, the 78-residue chain is D-alanyl carrier protein (78 aa).

The Carrier domain maps to 1–77 (MDLKEQIVEI…KVVAKVESLI (77 aa)). Serine 35 bears the O-(pantetheine 4'-phosphoryl)serine mark.

It belongs to the DltC family. In terms of processing, 4'-phosphopantetheine is transferred from CoA to a specific serine of apo-DCP.

The protein localises to the cytoplasm. It participates in cell wall biogenesis; lipoteichoic acid biosynthesis. Carrier protein involved in the D-alanylation of lipoteichoic acid (LTA). The loading of thioester-linked D-alanine onto DltC is catalyzed by D-alanine--D-alanyl carrier protein ligase DltA. The DltC-carried D-alanyl group is further transferred to cell membrane phosphatidylglycerol (PG) by forming an ester bond, probably catalyzed by DltD. D-alanylation of LTA plays an important role in modulating the properties of the cell wall in Gram-positive bacteria, influencing the net charge of the cell wall. This is D-alanyl carrier protein from Leuconostoc mesenteroides subsp. mesenteroides (strain ATCC 8293 / DSM 20343 / BCRC 11652 / CCM 1803 / JCM 6124 / NCDO 523 / NBRC 100496 / NCIMB 8023 / NCTC 12954 / NRRL B-1118 / 37Y).